The following is a 343-amino-acid chain: MNKPFIDVLAGQRQSAPPVWMMRQAGRYLPEYREVRAKAGGFLDLCFNPEMAAEVTLQPIRRFGFDAAIIFSDILVIPHALGRSVRFEVGEGPRLDPLDTPEKIATLAGHADLTKLDAVFEALRRVRAELPKSTALIGFCGAPWTVATYMVAGQGTPDQAPARLLAYAQPEAFSRIIDALVESSIAYLLKQLEAGADALQIFDTWAGVLSPREFARWSAAPTRRIVEGVRNARPDAKIIGFPRGAGALLPGYVAETAVDAVSIDWTAEPSLVRERVQSKVAVQGNLDPLALMTGGAALDQAVDDVLASYAGGRHIFNLGHGILPETPIAHVEQMLKRVRAYKG.

Substrate contacts are provided by residues Arg-23–Arg-27, Asp-73, Tyr-149, Thr-204, and His-320.

This sequence belongs to the uroporphyrinogen decarboxylase family. Homodimer.

Its subcellular location is the cytoplasm. It carries out the reaction uroporphyrinogen III + 4 H(+) = coproporphyrinogen III + 4 CO2. The protein operates within porphyrin-containing compound metabolism; protoporphyrin-IX biosynthesis; coproporphyrinogen-III from 5-aminolevulinate: step 4/4. Its function is as follows. Catalyzes the decarboxylation of four acetate groups of uroporphyrinogen-III to yield coproporphyrinogen-III. In Bradyrhizobium sp. (strain BTAi1 / ATCC BAA-1182), this protein is Uroporphyrinogen decarboxylase.